Consider the following 242-residue polypeptide: 3-deoxy-manno-octulosonate cytidylyltransferase (242 aa).

This sequence belongs to the KdsB family.

Its subcellular location is the cytoplasm. The catalysed reaction is 3-deoxy-alpha-D-manno-oct-2-ulosonate + CTP = CMP-3-deoxy-beta-D-manno-octulosonate + diphosphate. It participates in nucleotide-sugar biosynthesis; CMP-3-deoxy-D-manno-octulosonate biosynthesis; CMP-3-deoxy-D-manno-octulosonate from 3-deoxy-D-manno-octulosonate and CTP: step 1/1. It functions in the pathway bacterial outer membrane biogenesis; lipopolysaccharide biosynthesis. Its function is as follows. Activates KDO (a required 8-carbon sugar) for incorporation into bacterial lipopolysaccharide in Gram-negative bacteria. The polypeptide is 3-deoxy-manno-octulosonate cytidylyltransferase (Anaeromyxobacter dehalogenans (strain 2CP-1 / ATCC BAA-258)).